A 265-amino-acid chain; its full sequence is Tryptophan synthase alpha chain (265 aa).

Catalysis depends on proton acceptor residues E49 and E60.

This sequence belongs to the TrpA family. In terms of assembly, tetramer of two alpha and two beta chains.

The catalysed reaction is (1S,2R)-1-C-(indol-3-yl)glycerol 3-phosphate + L-serine = D-glyceraldehyde 3-phosphate + L-tryptophan + H2O. It functions in the pathway amino-acid biosynthesis; L-tryptophan biosynthesis; L-tryptophan from chorismate: step 5/5. In terms of biological role, the alpha subunit is responsible for the aldol cleavage of indoleglycerol phosphate to indole and glyceraldehyde 3-phosphate. The polypeptide is Tryptophan synthase alpha chain (Janthinobacterium sp. (strain Marseille) (Minibacterium massiliensis)).